We begin with the raw amino-acid sequence, 131 residues long: Fumarate reductase subunit C (131 aa).

A run of 3 helical transmembrane segments spans residues 30-50 (EGTC…VFAL), 58-78 (AGFV…VTLI), and 109-129 (IVRG…AVAL).

Belongs to the FrdC family. In terms of assembly, part of an enzyme complex containing four subunits: a flavoprotein (FrdA), an iron-sulfur protein (FrdB), and two hydrophobic anchor proteins (FrdC and FrdD).

It localises to the cell inner membrane. Its function is as follows. Two distinct, membrane-bound, FAD-containing enzymes are responsible for the catalysis of fumarate and succinate interconversion; fumarate reductase is used in anaerobic growth, and succinate dehydrogenase is used in aerobic growth. Anchors the catalytic components of the fumarate reductase complex to the cell inner membrane, binds quinones. The protein is Fumarate reductase subunit C of Proteus vulgaris.